Consider the following 207-residue polypeptide: Large ribosomal subunit protein uL4 (207 aa).

The disordered stretch occupies residues 44–81 (KRQGTQSAKTRSEVRGGGRKPWRQKGTGRARQGSIRSP). The span at 60–71 (GGRKPWRQKGTG) shows a compositional bias: basic residues.

It belongs to the universal ribosomal protein uL4 family. As to quaternary structure, part of the 50S ribosomal subunit.

Functionally, one of the primary rRNA binding proteins, this protein initially binds near the 5'-end of the 23S rRNA. It is important during the early stages of 50S assembly. It makes multiple contacts with different domains of the 23S rRNA in the assembled 50S subunit and ribosome. In terms of biological role, forms part of the polypeptide exit tunnel. In Finegoldia magna (strain ATCC 29328 / DSM 20472 / WAL 2508) (Peptostreptococcus magnus), this protein is Large ribosomal subunit protein uL4.